We begin with the raw amino-acid sequence, 328 residues long: Beta-agarase C (328 aa).

The N-terminal stretch at 1–17 (MNLTKMAVFAASLFCLA) is a signal peptide. Residues 18-67 (CKNDIDTELEKKSIPESEIQKSEEKLPNEEELTPTDPDEETNKEETVTAN) constitute a propeptide that is removed on maturation. The span at 26-45 (LEKKSIPESEIQKSEEKLPN) shows a compositional bias: basic and acidic residues. The tract at residues 26–61 (LEKKSIPESEIQKSEEKLPNEEELTPTDPDEETNKE) is disordered. Residues 46 to 59 (EEELTPTDPDEETN) are compositionally biased toward acidic residues. Positions 70 to 328 (YDFTGNTPPP…WIHTYQLVEE (259 aa)) constitute a GH16 domain. Substrate contacts are provided by residues tryptophan 110, 119-129 (KAENSGVSDGK), 133-135 (KAT), glutamate 188, glutamate 193, and arginine 224. Catalysis depends on glutamate 188, which acts as the Nucleophile. The active-site Proton donor is the glutamate 193.

It belongs to the glycosyl hydrolase 16 family.

The protein localises to the secreted. The enzyme catalyses Hydrolysis of (1-&gt;4)-beta-D-galactosidic linkages in agarose, giving the tetramer as the predominant product.. Functionally, cleaves the beta-1,4-linkages between beta-D-galactose and alpha-L-3,6-anhydro-galactose residues in agarose. Cleaves agarose in a random manner with retention of the anomeric-bond configuration, producing beta-anomers that give rise progressively to alpha-anomers when mutarotation takes place. The polypeptide is Beta-agarase C (agaC) (Zobellia galactanivorans (strain DSM 12802 / CCUG 47099 / CIP 106680 / NCIMB 13871 / Dsij)).